Here is a 359-residue protein sequence, read N- to C-terminus: ATP-dependent (S)-NAD(P)H-hydrate dehydratase (359 aa).

In terms of domain architecture, YjeF C-terminal spans 61–350; sequence LLEEARKVVP…SEINSVFVNN (290 aa). Residues Gly161 and 214-220 contribute to the (6S)-NADPHX site; that span reads NVVEFQR. ATP-binding positions include 256–260 and 275–284; these read KGEVD and GSPRRCGGQG. Asp285 is a binding site for (6S)-NADPHX.

Belongs to the NnrD/CARKD family. Requires Mg(2+) as cofactor.

It carries out the reaction (6S)-NADHX + ATP = ADP + phosphate + NADH + H(+). The enzyme catalyses (6S)-NADPHX + ATP = ADP + phosphate + NADPH + H(+). Functionally, catalyzes the dehydration of the S-form of NAD(P)HX at the expense of ATP, which is converted to ADP. Together with NAD(P)HX epimerase, which catalyzes the epimerization of the S- and R-forms, the enzyme allows the repair of both epimers of NAD(P)HX, a damaged form of NAD(P)H that is a result of enzymatic or heat-dependent hydration. This Ciona intestinalis (Transparent sea squirt) protein is ATP-dependent (S)-NAD(P)H-hydrate dehydratase.